The following is a 162-amino-acid chain: Cytochrome c-type biogenesis protein CcmE (162 aa).

At 1 to 7 (MTRKQRR) the chain is on the cytoplasmic side. Residues 8-28 (LTMIGGSLVVLAIAAALVLNA) form a helical; Signal-anchor for type II membrane protein membrane-spanning segment. The Periplasmic portion of the chain corresponds to 29–162 (LRDSIVFFST…EASGKQGVSQ (134 aa)). The heme site is built by His122 and Tyr126. The interval 138-162 (QGHWKDDYGPQAGAVEASGKQGVSQ) is disordered.

It belongs to the CcmE/CycJ family.

The protein localises to the cell inner membrane. In terms of biological role, heme chaperone required for the biogenesis of c-type cytochromes. Transiently binds heme delivered by CcmC and transfers the heme to apo-cytochromes in a process facilitated by CcmF and CcmH. The sequence is that of Cytochrome c-type biogenesis protein CcmE from Nitrobacter hamburgensis (strain DSM 10229 / NCIMB 13809 / X14).